The sequence spans 136 residues: Translation initiation factor 5A (136 aa).

At Lys-38 the chain carries Hypusine.

Belongs to the eIF-5A family.

It is found in the cytoplasm. Functions by promoting the formation of the first peptide bond. The chain is Translation initiation factor 5A from Methanopyrus kandleri (strain AV19 / DSM 6324 / JCM 9639 / NBRC 100938).